The sequence spans 347 residues: Toluene-4-sulfonate monooxygenase system iron-sulfur subunit TsaM1 (347 aa).

The Rieske domain occupies 7 to 109; it reads WYVAAWDTEI…VVERNRLVWI (103 aa). The [2Fe-2S] cluster site is built by C48, H50, C67, and H70.

In terms of assembly, homotetramer. Part of the p-toluenesulfonate methyl-monooxygenase complex TsaBM, comprising the reductase TsaB and the oxygenase TsaM. [2Fe-2S] cluster serves as cofactor.

The enzyme catalyses toluene-4-sulfonate + NADH + O2 + H(+) = 4-(hydroxymethyl)benzenesulfonate + NAD(+) + H2O. In terms of biological role, involved in the toluene-4-sulfonate degradation pathway. Does not discriminate between the sulfonate and the carboxyl substituents and can also be involved in the p-toluenecarboxylate degradation pathway. Can use toluene-4-sulfonate, p-toluate, m-toluate and 4-ethylbenzoate as substrates, but not p-xylene, toluene and p-cresol. Also catalyzes the demethylation of 4-methoxybenzoate to 4-hydroxybenzoate. The protein is Toluene-4-sulfonate monooxygenase system iron-sulfur subunit TsaM1 (tsaM1) of Comamonas testosteroni (Pseudomonas testosteroni).